Consider the following 400-residue polypeptide: Tryptophan synthase beta chain (400 aa).

Position 91 is an N6-(pyridoxal phosphate)lysine (Lys91).

Belongs to the TrpB family. In terms of assembly, tetramer of two alpha and two beta chains. Pyridoxal 5'-phosphate is required as a cofactor.

The enzyme catalyses (1S,2R)-1-C-(indol-3-yl)glycerol 3-phosphate + L-serine = D-glyceraldehyde 3-phosphate + L-tryptophan + H2O. It participates in amino-acid biosynthesis; L-tryptophan biosynthesis; L-tryptophan from chorismate: step 5/5. In terms of biological role, the beta subunit is responsible for the synthesis of L-tryptophan from indole and L-serine. The sequence is that of Tryptophan synthase beta chain from Listeria monocytogenes serotype 4a (strain HCC23).